The following is a 387-amino-acid chain: Alpha-sarcoglycan (387 aa).

An N-terminal signal peptide occupies residues 1-24; the sequence is MAAAALLWLPLLVGCLAGPGGTEA. Topologically, residues 25–290 are extracellular; the sequence is QQTTLYPLVG…ATARDFLADA (266 aa). Asparagine 174 and asparagine 246 each carry an N-linked (GlcNAc...) asparagine glycan. A helical transmembrane segment spans residues 291–311; the sequence is LVTLLVPLLVALLLALLLAYI. Residues 312–387 are Cytoplasmic-facing; the sequence is MCCRREGRLK…AQVPLILDQH (76 aa). Residue serine 377 is modified to Phosphoserine.

This sequence belongs to the sarcoglycan alpha/epsilon family. Cross-link to form 2 major subcomplexes: one consisting of SGCB, SGCD and SGCG and the other consisting of SGCB and SGCD. The association between SGCB and SGCG is particularly strong while SGCA is loosely associated with the other sarcoglycans. Interacts with the syntrophin SNTA1.

Its subcellular location is the cell membrane. The protein resides in the sarcolemma. It localises to the cytoplasm. The protein localises to the cytoskeleton. Its function is as follows. Component of the sarcoglycan complex, a subcomplex of the dystrophin-glycoprotein complex which forms a link between the F-actin cytoskeleton and the extracellular matrix. This chain is Alpha-sarcoglycan (SGCA), found in Oryctolagus cuniculus (Rabbit).